We begin with the raw amino-acid sequence, 494 residues long: DDB1- and CUL4-associated factor 4 (494 aa).

The segment at 1-65 is disordered; that stretch reads MHQSSWKSRR…AGSSSVPDLP (65 aa). The segment covering 7 to 20 has biased composition (basic residues); sequence KSRRHRRRGHRHSA. Positions 51–60 are enriched in low complexity; that stretch reads STSSTAGSSS. 2 WD repeats span residues 367–406 and 409–450; these read FHDS…CIRQ and GHVN…LLRT.

In terms of assembly, interacts with DDB1 and CUL4A.

The protein operates within protein modification; protein ubiquitination. May function as a substrate receptor for CUL4-DDB1 E3 ubiquitin-protein ligase complex. The sequence is that of DDB1- and CUL4-associated factor 4 (DCAF4) from Bos taurus (Bovine).